The following is a 184-amino-acid chain: Endothelial cell-specific molecule 1 (184 aa).

A signal peptide spans 1–21 (MKSLLLLTTLLIPLHLGMAWS). Positions 24–102 (YAVDCPEHCD…GDEFGVCKDC (79 aa)) constitute an IGFBP N-terminal domain. 6 cysteine pairs are disulfide-bonded: C28/C51, C32/C53, C37/C54, C43/C57, C65/C83, and C77/C99. The disordered stretch occupies residues 145-184 (RTSASQTERDAASGDGNAVREEIGDRNAARPSVMKWLNPR). Residues 151–172 (TERDAASGDGNAVREEIGDRNA) show a composition bias toward basic and acidic residues. A glycan (O-linked (Xyl...) (chondroitin sulfate) serine) is linked at S157.

O-glycosylated; contains chondroitin sulfate and dermatan sulfate. Pineal gland specific.

It localises to the secreted. Involved in angiogenesis; promotes angiogenic sprouting. May have potent implications in lung endothelial cell-leukocyte interactions. This is Endothelial cell-specific molecule 1 (Esm1) from Rattus norvegicus (Rat).